We begin with the raw amino-acid sequence, 1052 residues long: RTX-III toxin determinant A from serotype 8 (1052 aa).

3 consecutive transmembrane segments (helical) span residues Gly-248–Leu-265, Lys-275–Ala-334, and Asp-372–Glu-418. Hemolysin-type calcium-binding repeat units lie at residues Lys-744–Leu-761, Asn-762–Leu-779, Arg-780–Leu-797, Leu-798–Leu-815, Arg-826–Leu-843, and Asp-844–Tyr-861.

This sequence belongs to the RTX prokaryotic toxin (TC 1.C.11) family. Post-translationally, palmitoylated by ApxIIIC. The toxin only becomes active when modified.

Its subcellular location is the secreted. The protein resides in the host cell membrane. Does not have hemolytic activity but shows a strong cytotoxicity towards alveolar macrophages and neutrophils. The protein is RTX-III toxin determinant A from serotype 8 (apxIIIA) of Actinobacillus pleuropneumoniae (Haemophilus pleuropneumoniae).